A 275-amino-acid polypeptide reads, in one-letter code: 2,3,4,5-tetrahydropyridine-2,6-dicarboxylate N-succinyltransferase (275 aa).

It belongs to the transferase hexapeptide repeat family.

It is found in the cytoplasm. It carries out the reaction (S)-2,3,4,5-tetrahydrodipicolinate + succinyl-CoA + H2O = (S)-2-succinylamino-6-oxoheptanedioate + CoA. It functions in the pathway amino-acid biosynthesis; L-lysine biosynthesis via DAP pathway; LL-2,6-diaminopimelate from (S)-tetrahydrodipicolinate (succinylase route): step 1/3. This Cupriavidus taiwanensis (strain DSM 17343 / BCRC 17206 / CCUG 44338 / CIP 107171 / LMG 19424 / R1) (Ralstonia taiwanensis (strain LMG 19424)) protein is 2,3,4,5-tetrahydropyridine-2,6-dicarboxylate N-succinyltransferase.